Here is a 464-residue protein sequence, read N- to C-terminus: Bifunctional protein GlmU (464 aa).

The interval 1-231 (MDVVIMAAGK…ATQVAGVNSP (231 aa)) is pyrophosphorylase. UDP-N-acetyl-alpha-D-glucosamine-binding positions include K20, Q78, 83 to 84 (GT), 105 to 107 (SGD), G142, E156, and N229. D107 contacts Mg(2+). N229 provides a ligand contact to Mg(2+). A linker region spans residues 232–252 (VQLAALERAFQSKVALQLMEQ). Residues 253-464 (GVRLADPARL…SIANWKRPSK (212 aa)) are N-acetyltransferase. The UDP-N-acetyl-alpha-D-glucosamine site is built by R343 and K361. H373 functions as the Proton acceptor in the catalytic mechanism. UDP-N-acetyl-alpha-D-glucosamine contacts are provided by Y376 and N387. Residues A390, 396-397 (NY), S415, G433, and R450 each bind acetyl-CoA.

The protein in the N-terminal section; belongs to the N-acetylglucosamine-1-phosphate uridyltransferase family. This sequence in the C-terminal section; belongs to the transferase hexapeptide repeat family. As to quaternary structure, homotrimer. Requires Mg(2+) as cofactor.

It localises to the cytoplasm. It catalyses the reaction alpha-D-glucosamine 1-phosphate + acetyl-CoA = N-acetyl-alpha-D-glucosamine 1-phosphate + CoA + H(+). The catalysed reaction is N-acetyl-alpha-D-glucosamine 1-phosphate + UTP + H(+) = UDP-N-acetyl-alpha-D-glucosamine + diphosphate. It functions in the pathway nucleotide-sugar biosynthesis; UDP-N-acetyl-alpha-D-glucosamine biosynthesis; N-acetyl-alpha-D-glucosamine 1-phosphate from alpha-D-glucosamine 6-phosphate (route II): step 2/2. It participates in nucleotide-sugar biosynthesis; UDP-N-acetyl-alpha-D-glucosamine biosynthesis; UDP-N-acetyl-alpha-D-glucosamine from N-acetyl-alpha-D-glucosamine 1-phosphate: step 1/1. The protein operates within bacterial outer membrane biogenesis; LPS lipid A biosynthesis. In terms of biological role, catalyzes the last two sequential reactions in the de novo biosynthetic pathway for UDP-N-acetylglucosamine (UDP-GlcNAc). The C-terminal domain catalyzes the transfer of acetyl group from acetyl coenzyme A to glucosamine-1-phosphate (GlcN-1-P) to produce N-acetylglucosamine-1-phosphate (GlcNAc-1-P), which is converted into UDP-GlcNAc by the transfer of uridine 5-monophosphate (from uridine 5-triphosphate), a reaction catalyzed by the N-terminal domain. The chain is Bifunctional protein GlmU from Albidiferax ferrireducens (strain ATCC BAA-621 / DSM 15236 / T118) (Rhodoferax ferrireducens).